A 440-amino-acid polypeptide reads, in one-letter code: Polyprenol-phosphate-mannose-dependent alpha-(1-2)-phosphatidylinositol mannoside mannosyltransferase (440 aa).

A run of 11 helical transmembrane segments spans residues 15–35 (LAPT…VLWV), 87–107 (LAAI…SSAI), 109–129 (ATTL…LDVW), 144–161 (AWLA…LEPI), 164–184 (NFEF…DCVP), 193–213 (LLLG…LYFL), 224–244 (TAAT…SDSV), 281–301 (PRFI…VWAA), 316–336 (APVL…PVSW), 360–380 (VWFT…PITL), and 395–415 (LAGG…GLVS). Residues 419–440 (THTGDAHETDEPLVPLARGEAG) are disordered.

Belongs to the glycosyltransferase 87 family.

The protein resides in the cell membrane. It participates in phospholipid metabolism; phosphatidylinositol metabolism. Responsible for the addition of alpha-(1-2) mannose branches to the linear mannan core on the biosynthetic pathway to mature Lipoarabinomannan (LAM). This is Polyprenol-phosphate-mannose-dependent alpha-(1-2)-phosphatidylinositol mannoside mannosyltransferase from Mycolicibacterium smegmatis (strain ATCC 700084 / mc(2)155) (Mycobacterium smegmatis).